We begin with the raw amino-acid sequence, 313 residues long: Porphobilinogen deaminase (313 aa).

Cysteine 242 carries the post-translational modification S-(dipyrrolylmethanemethyl)cysteine.

The protein belongs to the HMBS family. Monomer. The cofactor is dipyrromethane.

The enzyme catalyses 4 porphobilinogen + H2O = hydroxymethylbilane + 4 NH4(+). Its pathway is porphyrin-containing compound metabolism; protoporphyrin-IX biosynthesis; coproporphyrinogen-III from 5-aminolevulinate: step 2/4. In terms of biological role, tetrapolymerization of the monopyrrole PBG into the hydroxymethylbilane pre-uroporphyrinogen in several discrete steps. This chain is Porphobilinogen deaminase, found in Yersinia pseudotuberculosis serotype IB (strain PB1/+).